The primary structure comprises 496 residues: RNA-binding motif protein, Y chromosome, family 1 member E (496 aa).

One can recognise an RRM domain in the interval 8–85; sequence GKLFIGGLNR…KAIKVEQAKK (78 aa). Disordered regions lie at residues 67-348 and 453-496; these read DMNG…PHRD and DQRN…SSRY. Composition is skewed to low complexity over residues 97-114 and 149-159; these read PASS…SARG and PVKRGPSSRSG. Residues 175–184 show a composition bias toward polar residues; that stretch reads NSWMGSQGPM. Composition is skewed to basic and acidic residues over residues 204–214, 242–253, 276–289, 313–326, 335–348, and 484–496; these read RNDRMSTRHDG, DNGHSNRDEHSS, AYRD…DESY, GYRD…HESY, SSRE…PHRD, and GESR…SSRY.

Interacts with splicing factor proteins SFRS3/SRP20, TRA2B/SFRS10, KHDRBS1/SAM68 and KHDRBS3. As to expression, testis-specific.

The protein resides in the nucleus. In terms of biological role, RNA-binding protein which may be involved in spermatogenesis. Required for sperm development, possibly by participating in pre-mRNA splicing in the testis. The polypeptide is RNA-binding motif protein, Y chromosome, family 1 member E (RBMY1E) (Homo sapiens (Human)).